A 701-amino-acid chain; its full sequence is Methionine--tRNA ligase (701 aa).

The short motif at 13–23 (PYANGSIHLGH) is the 'HIGH' region element. Positions 144, 147, 157, and 160 each coordinate Zn(2+). The 'KMSKS' region signature appears at 336 to 340 (KMSKS). Lys-339 serves as a coordination point for ATP. The region spanning 600-701 (DFSKIDLRIA…SGAQPGMRVK (102 aa)) is the tRNA-binding domain.

Belongs to the class-I aminoacyl-tRNA synthetase family. MetG type 1 subfamily. In terms of assembly, homodimer. The cofactor is Zn(2+).

It is found in the cytoplasm. The catalysed reaction is tRNA(Met) + L-methionine + ATP = L-methionyl-tRNA(Met) + AMP + diphosphate. Functionally, is required not only for elongation of protein synthesis but also for the initiation of all mRNA translation through initiator tRNA(fMet) aminoacylation. In Nitrosomonas eutropha (strain DSM 101675 / C91 / Nm57), this protein is Methionine--tRNA ligase.